The sequence spans 470 residues: Cupincin (470 aa).

Residues Met-1–Trp-34 form the signal peptide. The segment covering Arg-36–Glu-52 has biased composition (basic and acidic residues). 2 disordered regions span residues Arg-36–Leu-59 and Lys-240–Leu-261. Cupin type-1 domains follow at residues Tyr-57–Glu-215 and Ser-259–Ala-445. N-linked (GlcNAc...) asparagine glycosylation is present at Asn-297. The interval Pro-330–Arg-368 is disordered. Residues Ser-338–Ala-367 show a composition bias toward basic and acidic residues. The Zn(2+) site is built by His-347, Glu-352, and His-360.

Belongs to the 7S seed storage protein family. In terms of assembly, homotrimer. Zn(2+) serves as cofactor.

The protein resides in the secreted. Functionally, seed storage protein. Globulin-like protein that acts as a zinc metalloprotease. Cleaves specifically between Leu-15 and Tyr-16 of insulin B chain, and Gln-1 and Leu-2 of neurotensin (NT) peptide in vitro. May play a role as an initiating endopeptidase in germinating seeds. The polypeptide is Cupincin (Oryza sativa subsp. japonica (Rice)).